Reading from the N-terminus, the 893-residue chain is Serine/threonine-protein kinase/endoribonuclease IRE1 (893 aa).

A signal peptide spans 1–19 (MRSLRRVLLQLVLLAGVAF). Residues 20–379 (RGVRFDDAAD…NSVTKFSYRW (360 aa)) lie on the Lumenal side of the membrane. N-linked (GlcNAc...) asparagine glycosylation is found at N105, N158, N259, and N351. The chain crosses the membrane as a helical span at residues 380 to 397 (LFPTFLMLLIMACLVKLA). Over 398 to 893 (DASKYCRQFV…FSKYFLGSSA (496 aa)) the chain is Cytoplasmic. The segment at 451–478 (ASDKEGNGTGGSTEAQSNKAHDSTNVEL) is disordered. The region spanning 491–759 (CVYSKEIGKG…AVYVMHHPFF (269 aa)) is the Protein kinase domain. ATP-binding positions include 497–505 (IGKGSNGTV) and K519. The active-site Proton acceptor is the D625. One can recognise a KEN domain in the interval 762–890 (PELCLSFLRD…EEAFSKYFLG (129 aa)).

This sequence belongs to the protein kinase superfamily. Ser/Thr protein kinase family. As to quaternary structure, homodimer; disulfide-linked. Dimer formation is driven by hydrophobic interactions within the N-terminal luminal domains and stabilized by disulfide bridges. Post-translationally, autophosphorylated. Expressed in roots, nodes, internodes, leaf sheaths, leaf blades, young ears and mature ears.

It is found in the endoplasmic reticulum membrane. It catalyses the reaction L-seryl-[protein] + ATP = O-phospho-L-seryl-[protein] + ADP + H(+). The enzyme catalyses L-threonyl-[protein] + ATP = O-phospho-L-threonyl-[protein] + ADP + H(+). Involved in endoplasmic reticulum (ER) stress response. Senses unfolded proteins in the lumen of the ER via its N-terminal domain which leads to enzyme auto-activation. The active endoribonuclease domain splices bZIP50 mRNA to generate a new C-terminus, converting it into a potent unfolded-protein response (UPR) transcriptional activator, which then induces transcription of UPR target genes, such as luminal-binding protein (BiP) chaperones. This Oryza sativa subsp. japonica (Rice) protein is Serine/threonine-protein kinase/endoribonuclease IRE1.